Reading from the N-terminus, the 105-residue chain is Met repressor (105 aa).

Belongs to the MetJ family. In terms of assembly, homodimer.

Its subcellular location is the cytoplasm. This regulatory protein, when combined with SAM (S-adenosylmethionine) represses the expression of the methionine regulon and of enzymes involved in SAM synthesis. The chain is Met repressor from Vibrio cholerae serotype O1 (strain ATCC 39541 / Classical Ogawa 395 / O395).